Here is a 405-residue protein sequence, read N- to C-terminus: Phosphopentomutase (405 aa).

Mn(2+)-binding residues include aspartate 10, aspartate 297, histidine 302, aspartate 338, histidine 339, and histidine 350.

The protein belongs to the phosphopentomutase family. It depends on Mn(2+) as a cofactor.

It localises to the cytoplasm. The catalysed reaction is 2-deoxy-alpha-D-ribose 1-phosphate = 2-deoxy-D-ribose 5-phosphate. It carries out the reaction alpha-D-ribose 1-phosphate = D-ribose 5-phosphate. It functions in the pathway carbohydrate degradation; 2-deoxy-D-ribose 1-phosphate degradation; D-glyceraldehyde 3-phosphate and acetaldehyde from 2-deoxy-alpha-D-ribose 1-phosphate: step 1/2. Its function is as follows. Isomerase that catalyzes the conversion of deoxy-ribose 1-phosphate (dRib-1-P) and ribose 1-phosphate (Rib-1-P) to deoxy-ribose 5-phosphate (dRib-5-P) and ribose 5-phosphate (Rib-5-P), respectively. This is Phosphopentomutase from Pseudoalteromonas translucida (strain TAC 125).